The following is a 475-amino-acid chain: Actin-related protein 10 (475 aa).

This sequence belongs to the actin family.

The protein resides in the cytoplasm. It is found in the cytoskeleton. This chain is Actin-related protein 10, found in Dictyostelium discoideum (Social amoeba).